A 232-amino-acid polypeptide reads, in one-letter code: AA9 family lytic polysaccharide monooxygenase C (232 aa).

The N-terminal stretch at 1–19 is a signal peptide; it reads MKAAVSLALLVAVAGAASA. Cu(2+) contacts are provided by H20 and H91. A disulfide bridge connects residues C61 and C180. The O2 site is built by H166 and Q175. Residue Y177 coordinates Cu(2+). N184 carries an N-linked (GlcNAc...) asparagine glycan.

It belongs to the polysaccharide monooxygenase AA9 family. It depends on Cu(2+) as a cofactor.

The protein localises to the secreted. It catalyses the reaction [(1-&gt;4)-beta-D-glucosyl]n+m + reduced acceptor + O2 = 4-dehydro-beta-D-glucosyl-[(1-&gt;4)-beta-D-glucosyl]n-1 + [(1-&gt;4)-beta-D-glucosyl]m + acceptor + H2O.. In terms of biological role, lytic polysaccharide monooxygenase (LPMO) that depolymerizes crystalline and amorphous polysaccharides via the oxidation of scissile alpha- or beta-(1-4)-glycosidic bonds, yielding C1 or C4 oxidation products. Catalysis by LPMOs requires the reduction of the active-site copper from Cu(II) to Cu(I) by a reducing agent and H(2)O(2) or O(2) as a cosubstrate. This Malbranchea cinnamomea (Thermophilic fungus) protein is AA9 family lytic polysaccharide monooxygenase C.